A 929-amino-acid chain; its full sequence is MTTESGSDSESKPDQEAEPQEAAGPQGQAGAQPGPEPAGGNGSLNGEKQQPALEQFPEAAAHSTPVKREIGDKDRDFAAAAAKQLEYQQFEDDKLSQRSSSSKLSRSPLKIVKRPKSMQCKVTLLDGSEYGCDVDKRSRGQVLFDKVCEHLNLLEKDYFGLTYRDAENQKNWLDPAKEIKKQIRSGAWHFSFNVKFYPPDPAQLSEDITRYYLCLQLRDDIVSGRLPCSFVTLALLGSYTVQSELGDYDPDECGNDYISEFRFAPNHTKELEDKVIELHKSHRGMTPAEAEMHFLENAKKLSMYGVDLHHAKDSEGVEIMLGVCASGLLIYRDRLRINRFAWPKVLKISYKRNNFYIKIRPGEFEQFESTIGFKLPNHRAAKRLWKVCVEHHTFFRLLLPEAPPKKFLTLGSKFRYSGRTQAQTRRASALIDRPAPYFERSSSKRYTMSRSLDGASVSENHEIYMKDSVSAAEVGTGQYATTKGISQTNLITTVTPEKKAEEERVEEEDRRKKAEEATPVTALRHEGKTDSERTDTAADGETSATESDQEEDAEIKAQDLDKTQDELMKHQTNISELKRTFLETSTETALTNEWEKRLSTSPVRLAARQEDAPMIEPLVPEETKQSSGEKLMDGSEILSLLESARKPTEFIGGVSSTTQSWVQKLETKTEPVEAEVESTPHPQPLSTEKVLQETILVEERHVMSVHASGDASHTARDEVDAAESTPTDRRHTGKGKEGSSVTEAAKEQRGEEVDQSAPEQEQPATVSHEEEQASTIRTSEGLEQKSHFESSTVRVESTSVGSISPGGAKLEISTKEVPVVHTETKTITYESSQVDPGADLEPGVLMSAQTITSETTSTTTTTHITKTVKGGISETRIEKRIVITGDADIDHDQALAQAIKEAKEQHPDMSVTKVVVHKETEITPEDGED.

Position 1 is an N-acetylmethionine (M1). The segment at 1–72 is disordered; that stretch reads MTTESGSDSE…STPVKREIGD (72 aa). The residue at position 2 (T2) is an N-acetylthreonine; in Band 4.1-like protein 3, N-terminally processed. The segment covering 20–33 has biased composition (low complexity); that stretch reads QEAAGPQGQAGAQP. S96 carries the post-translational modification Phosphoserine. Positions 118–399 constitute an FERM domain; the sequence is MQCKVTLLDG…EHHTFFRLLL (282 aa). Residues 402–528 form a hydrophilic region; that stretch reads APPKKFLTLG…PVTALRHEGK (127 aa). S428, S451, and S486 each carry phosphoserine. The segment at 490–554 is disordered; it reads LITTVTPEKK…TESDQEEDAE (65 aa). T495 carries the phosphothreonine modification. Residues 496–516 show a composition bias toward basic and acidic residues; it reads PEKKAEEERVEEEDRRKKAEE. Position 518 is a phosphothreonine (T518). Residues 523 to 536 are compositionally biased toward basic and acidic residues; the sequence is LRHEGKTDSERTDT. H525 and S543 each carry phosphoserine. T545 is modified (phosphothreonine). S547 is subject to Phosphoserine. Positions 559-602 are spectrin--actin-binding; sequence DLDKTQDELMKHQTNISELKRTFLETSTETALTNEWEKRLSTSP. 3 disordered regions span residues 608-630, 665-689, and 705-807; these read RQEDAPMIEPLVPEETKQSSGEK, LETKTEPVEAEVESTPHPQPLSTEK, and VHAS…SPGG. At T725 the chain carries Phosphothreonine. The segment covering 726 to 737 has biased composition (basic and acidic residues); it reads PTDRRHTGKGKE. Residues 777 to 929 form a C-terminal (CTD) region; that stretch reads RTSEGLEQKS…TEITPEDGED (153 aa). Residues 789–802 show a composition bias toward low complexity; the sequence is ESSTVRVESTSVGS. Phosphoserine occurs at positions 802 and 804. T923 carries the post-translational modification Phosphothreonine.

In terms of assembly, interacts (via FERM domain) with CADM1. Interacts (via FERM domain) with PRMT3; the interaction is direct and inhibits the protein-arginine N-methyltransferase activity of PRMT3. Interacts with PRMT5. Interacts with PRMT6. As to quaternary structure, has the complete spectrin--actin-binding (SAB) domain and fully interacts with spectrin and actin. As to expression, detected in brain (at protein level). Highest expression in brain, lower in testis, adrenal gland, heart and kidney. Also present in muscle and epithelial cells. Isoform 1 is expressed in brain, isoform 2 is expressed in heart and isoform 3 is mostly expressed in kidney but also in heart and brain. Isoform 6 seems to be most abundant in kidney while isoform 4 and isoform 5 are predominantly expressed in heart and brain.

Its subcellular location is the cytoplasm. It localises to the cytoskeleton. The protein resides in the cell membrane. The protein localises to the cell junction. Its function is as follows. Tumor suppressor that inhibits cell proliferation and promotes apoptosis. Modulates the activity of protein arginine N-methyltransferases, including PRMT3 and PRMT5. This is Band 4.1-like protein 3 from Mus musculus (Mouse).